The chain runs to 325 residues: Aldo-keto reductase family 1 member A1 (325 aa).

At Ala-2 the chain carries N-acetylalanine. Ser-4 is modified (phosphoserine). NADP(+) contacts are provided by residues 11-20 (GQKMPLIGLG), Thr-21, and Trp-22. Ser-38 is subject to Phosphoserine. Asp-45 contacts NADP(+). Tyr-50 serves as the catalytic Proton donor. At Lys-127 the chain carries N6-acetyllysine; alternate. Lys-127 carries the post-translational modification N6-succinyllysine; alternate. Lys-145 is subject to N6-succinyllysine. NADP(+)-binding residues include Ser-162, Asn-163, Ser-211, Leu-213, Ser-215, Ser-216, Lys-263, Ser-264, Ile-265, Thr-266, Arg-269, Gln-272, and Asn-273. Ser-211 carries the phosphoserine modification.

This sequence belongs to the aldo/keto reductase family. As to quaternary structure, monomer. In terms of tissue distribution, widely expressed. Highly expressed in kidney, salivary gland and liver. Detected in trachea, stomach, brain, lung, prostate, placenta, mammary gland, small intestine and lung.

The protein resides in the cytoplasm. It localises to the cytosol. The protein localises to the apical cell membrane. It catalyses the reaction a primary alcohol + NADP(+) = an aldehyde + NADPH + H(+). The enzyme catalyses allyl alcohol + NADP(+) = acrolein + NADPH + H(+). The catalysed reaction is glycerol + NADP(+) = D-glyceraldehyde + NADPH + H(+). It carries out the reaction glycerol + NADP(+) = L-glyceraldehyde + NADPH + H(+). It catalyses the reaction hydroxyacetone + NADP(+) = methylglyoxal + NADPH + H(+). The enzyme catalyses a 4-hydroxynonen-1-ol + NADP(+) = a 4-hydroxynonenal + NADPH + H(+). The catalysed reaction is 3-deoxyfructose + NADP(+) = 3-deoxyglucosone + NADPH + H(+). It carries out the reaction L-gulonate + NADP(+) = aldehydo-D-glucuronate + NADPH + H(+). It catalyses the reaction L-gulono-1,4-lactone + NADP(+) = D-glucurono-3,6-lactone + NADPH + H(+). The enzyme catalyses pyridine 3-methanol + NADP(+) = pyridine-3-carbaldehyde + NADPH + H(+). The catalysed reaction is S-nitroso-CoA + NADPH + H(+) = sulfinamide-CoA + NADP(+). It carries out the reaction S-nitrosoglutathione + NADPH + H(+) = S-(hydroxysulfenamide)glutathione + NADP(+). Its function is as follows. Catalyzes the NADPH-dependent reduction of a wide variety of carbonyl-containing compounds to their corresponding alcohols. Displays enzymatic activity towards endogenous metabolites such as aromatic and aliphatic aldehydes, ketones, monosaccharides and bile acids, with a preference for negatively charged substrates, such as glucuronate and succinic semialdehyde. Functions as a detoxifiying enzyme by reducing a range of toxic aldehydes. Reduces methylglyoxal and 3-deoxyglucosone, which are present at elevated levels under hyperglycemic conditions and are cytotoxic. Involved also in the detoxification of lipid-derived aldehydes like acrolein. Plays a role in the activation of procarcinogens, such as polycyclic aromatic hydrocarbon trans-dihydrodiols, and in the metabolism of various xenobiotics and drugs, including the anthracyclines doxorubicin (DOX) and daunorubicin (DAUN). Also acts as an inhibitor of protein S-nitrosylation by mediating degradation of S-nitroso-coenzyme A (S-nitroso-CoA), a cofactor required to S-nitrosylate proteins. S-nitroso-CoA reductase activity is involved in reprogramming intermediary metabolism in renal proximal tubules, notably by inhibiting protein S-nitrosylation of isoform 2 of PKM (PKM2). Also acts as a S-nitroso-glutathione reductase by catalyzing the NADPH-dependent reduction of S-nitrosoglutathione. Displays no reductase activity towards retinoids. This chain is Aldo-keto reductase family 1 member A1 (AKR1A1), found in Homo sapiens (Human).